Consider the following 697-residue polypeptide: Colicin-D (697 aa).

The TonB box motif lies at 17–24 (HSMVVWPS).

The protein belongs to the cloacin colicin family.

In terms of biological role, colicins are polypeptide toxins produced by and active against E.coli and closely related bacteria. Its function is as follows. Colicin D inhibits protein synthesis. The sequence is that of Colicin-D (cda) from Escherichia coli.